A 98-amino-acid polypeptide reads, in one-letter code: NADH-ubiquinone oxidoreductase chain 4L (98 aa).

Helical transmembrane passes span 1–21, 26–46, and 59–79; these read MTHIMFTFSTAFMLGLSGLTF, LLSALLCLEGMMLSLFIALAM, and APLLLLALSACEAGLGLSLLV.

It belongs to the complex I subunit 4L family.

The protein localises to the mitochondrion membrane. It carries out the reaction a ubiquinone + NADH + 5 H(+)(in) = a ubiquinol + NAD(+) + 4 H(+)(out). Its function is as follows. Core subunit of the mitochondrial membrane respiratory chain NADH dehydrogenase (Complex I) which catalyzes electron transfer from NADH through the respiratory chain, using ubiquinone as an electron acceptor. Part of the enzyme membrane arm which is embedded in the lipid bilayer and involved in proton translocation. The polypeptide is NADH-ubiquinone oxidoreductase chain 4L (MT-ND4L) (Polypterus ornatipinnis (Ornate bichir)).